Consider the following 450-residue polypeptide: Probable ECA polymerase (450 aa).

11 helical membrane-spanning segments follow: residues 6 to 26 (FSGL…LTWF), 37 to 57 (VFFS…TSVL), 63 to 83 (VGVA…CFYA), 118 to 138 (VILM…NGFL), 155 to 175 (GVAL…VYFL), 181 to 201 (AWLF…MIVG), 207 to 227 (IIIA…ISLW), 228 to 248 (MLAA…LKRY), 341 to 361 (LVVM…GLII), 378 to 398 (YKAA…IVLA), and 410 to 430 (VFFI…YWLF).

It belongs to the WzyE family. Probably part of a complex composed of WzxE, WzyE and WzzE.

The protein localises to the cell inner membrane. It participates in bacterial outer membrane biogenesis; enterobacterial common antigen biosynthesis. Its function is as follows. Probably involved in the polymerization of enterobacterial common antigen (ECA) trisaccharide repeat units. In Shigella boydii serotype 18 (strain CDC 3083-94 / BS512), this protein is Probable ECA polymerase.